The chain runs to 273 residues: DnaJ homolog subfamily C member 27 (273 aa).

Residues 1 to 18 are required for interaction with MAPK1; the sequence is MEANMPKRKEPGRSLRIK. Residues 23–30, 71–75, and 134–137 contribute to the GTP site; these read GNAEVGKS, DMAGH, and NKID. One can recognise a J domain in the interval 217–273; the sequence is GSWDMLGVKPGASRDEVNKACRKLAVLLHPDKCVAPGSEDAFKAVVNARTALLKNIK.

It belongs to the small GTPase superfamily. Rab family. In terms of assembly, interacts directly with MAPK1 (wild-type and kinase-deficient forms). Interacts directly (in GTP-bound form) with MAP2K1 (wild-type and kinase-deficient forms).

The protein resides in the nucleus. Functionally, GTPase which can activate the MEK/ERK pathway and induce cell transformation when overexpressed. May act as a nuclear scaffold for MAPK1, probably by association with MAPK1 nuclear export signal leading to enhanced ERK1/ERK2 signaling. The polypeptide is DnaJ homolog subfamily C member 27 (DNAJC27) (Pongo abelii (Sumatran orangutan)).